We begin with the raw amino-acid sequence, 148 residues long: uncharacterized protein (148 aa).

One can recognise an ABC transmembrane type-1 domain in the interval 25 to 148; sequence LSIGLIFSLI…YSITNIFIYN (124 aa). 3 consecutive transmembrane segments (helical) span residues 26–46, 60–80, and 127–147; these read SIGL…PLII, IVII…STYI, and ITRV…IFIY.

It localises to the cell membrane. This is an uncharacterized protein from Staphylococcus epidermidis.